Reading from the N-terminus, the 225-residue chain is tRNA (guanine-N(1)-)-methyltransferase (225 aa).

S-adenosyl-L-methionine is bound by residues Gly112 and 132–137; that span reads IGDYVL.

This sequence belongs to the RNA methyltransferase TrmD family. In terms of assembly, homodimer.

The protein resides in the cytoplasm. The enzyme catalyses guanosine(37) in tRNA + S-adenosyl-L-methionine = N(1)-methylguanosine(37) in tRNA + S-adenosyl-L-homocysteine + H(+). Functionally, specifically methylates guanosine-37 in various tRNAs. This chain is tRNA (guanine-N(1)-)-methyltransferase, found in Porphyromonas gingivalis (strain ATCC 33277 / DSM 20709 / CIP 103683 / JCM 12257 / NCTC 11834 / 2561).